Reading from the N-terminus, the 315-residue chain is Lipoyl synthase (315 aa).

Residues C63, C68, C74, C89, C93, C96, and S303 each contribute to the [4Fe-4S] cluster site. The 218-residue stretch at 75-292 (FSHGTATFMI…EKKAYDMGFR (218 aa)) folds into the Radical SAM core domain.

This sequence belongs to the radical SAM superfamily. Lipoyl synthase family. It depends on [4Fe-4S] cluster as a cofactor.

It is found in the cytoplasm. The catalysed reaction is [[Fe-S] cluster scaffold protein carrying a second [4Fe-4S](2+) cluster] + N(6)-octanoyl-L-lysyl-[protein] + 2 oxidized [2Fe-2S]-[ferredoxin] + 2 S-adenosyl-L-methionine + 4 H(+) = [[Fe-S] cluster scaffold protein] + N(6)-[(R)-dihydrolipoyl]-L-lysyl-[protein] + 4 Fe(3+) + 2 hydrogen sulfide + 2 5'-deoxyadenosine + 2 L-methionine + 2 reduced [2Fe-2S]-[ferredoxin]. It functions in the pathway protein modification; protein lipoylation via endogenous pathway; protein N(6)-(lipoyl)lysine from octanoyl-[acyl-carrier-protein]: step 2/2. In terms of biological role, catalyzes the radical-mediated insertion of two sulfur atoms into the C-6 and C-8 positions of the octanoyl moiety bound to the lipoyl domains of lipoate-dependent enzymes, thereby converting the octanoylated domains into lipoylated derivatives. The sequence is that of Lipoyl synthase from Laribacter hongkongensis (strain HLHK9).